The primary structure comprises 717 residues: Serine/threonine-protein kinase STE11 (717 aa).

Residues Asn-20–Asp-84 enclose the SAM domain. At Ser-323 the chain carries Phosphoserine. The region spanning Trp-415 to Leu-712 is the Protein kinase domain. ATP is bound by residues Ile-421–Val-429 and Lys-444. Residues Asn-452–Asp-466 show a composition bias toward polar residues. Residues Asn-452–Val-481 form a disordered region. Phosphoserine is present on Ser-465. The Proton acceptor role is filled by Asp-579.

The protein belongs to the protein kinase superfamily. STE Ser/Thr protein kinase family. MAP kinase kinase kinase subfamily. As to quaternary structure, homodimer. Interacts (via SAM domain) with STE50 (via SAM domain). Interacts with PBS2 and SHO1.

It catalyses the reaction L-seryl-[protein] + ATP = O-phospho-L-seryl-[protein] + ADP + H(+). The catalysed reaction is L-threonyl-[protein] + ATP = O-phospho-L-threonyl-[protein] + ADP + H(+). In terms of biological role, serine/threonine protein kinase required for cell-type-specific transcription and signal transduction in yeast. It is thought that it phosphorylates the STE7 protein kinase which itself, phosphorylates the FUS3 and or KSS1 kinases. The sequence is that of Serine/threonine-protein kinase STE11 (STE11) from Saccharomyces cerevisiae (strain ATCC 204508 / S288c) (Baker's yeast).